Reading from the N-terminus, the 428-residue chain is Dihydroorotase (428 aa).

His-59 and His-61 together coordinate Zn(2+). Substrate is bound by residues His-61–Arg-63 and Asn-93. Zn(2+) is bound by residues Asp-151, His-178, and His-231. Asn-277 provides a ligand contact to substrate. Residue Asp-304 coordinates Zn(2+). Asp-304 is a catalytic residue. Residues His-308 and Phe-322–Gly-323 contribute to the substrate site.

This sequence belongs to the metallo-dependent hydrolases superfamily. DHOase family. Class I DHOase subfamily. It depends on Zn(2+) as a cofactor.

The enzyme catalyses (S)-dihydroorotate + H2O = N-carbamoyl-L-aspartate + H(+). It participates in pyrimidine metabolism; UMP biosynthesis via de novo pathway; (S)-dihydroorotate from bicarbonate: step 3/3. Functionally, catalyzes the reversible cyclization of carbamoyl aspartate to dihydroorotate. This Halalkalibacterium halodurans (strain ATCC BAA-125 / DSM 18197 / FERM 7344 / JCM 9153 / C-125) (Bacillus halodurans) protein is Dihydroorotase.